Consider the following 238-residue polypeptide: Calmodulin-binding protein 25 (238 aa).

Over residues 68-78 the composition is skewed to polar residues; it reads STNTLSSTVSG. The tract at residues 68–87 is disordered; the sequence is STNTLSSTVSGASDPEIIGG. The Bipartite nuclear localization signal signature appears at 92 to 108; sequence KRNCLLTDGKAAKRRAR. The VQ signature appears at 125 to 134; sequence FRQMVQQVTG. Residues 201–220 form a disordered region; that stretch reads SSVGLPSGKPSATADPGGSA.

Interacts with calmodulin (CaM). Interacts with WRKY25 and WRKY51. As to expression, expressed in leaves, flowers and siliques.

The protein resides in the nucleus. In terms of biological role, calmodulin-binding protein that functions as a negative regulator of osmotic stress tolerance. The protein is Calmodulin-binding protein 25 of Arabidopsis thaliana (Mouse-ear cress).